The sequence spans 83 residues: Neurotoxin-1'' (83 aa).

An N-terminal signal peptide occupies residues 1 to 19; it reads MNYLVMISLALLLMIGVES. The 62-residue stretch at 21–82 folds into the LCN-type CS-alpha/beta domain; sequence RDGYIVYPNN…PIKDTSRKCT (62 aa). Cystine bridges form between C31–C81, C35–C53, C39–C63, and C43–C65. Residue R83 is a propeptide, removed by a carboxypeptidase (in neurotoxin-1/1').

Belongs to the long (4 C-C) scorpion toxin superfamily. Sodium channel inhibitor family. Alpha subfamily. Expressed by the venom gland.

Its subcellular location is the secreted. In terms of biological role, alpha toxins bind voltage-independently at site-3 of sodium channels (Nav) and inhibit the inactivation of the activated channels, thereby blocking neuronal transmission. Is active against mammals and binds with high affinity rat brain synaptosomes. The chain is Neurotoxin-1'' from Androctonus australis (Sahara scorpion).